Reading from the N-terminus, the 66-residue chain is MSDEKYNAKLDQAGGKLKEGFGKISGDKSLETEGKVDKVTGKVKEVIADAKDTVKGLAKGLDNKDK.

The protein belongs to the UPF0337 (CsbD) family.

The protein is UPF0337 protein SpyM3_0896 of Streptococcus pyogenes serotype M3 (strain ATCC BAA-595 / MGAS315).